Reading from the N-terminus, the 392-residue chain is ATP phosphoribosyltransferase regulatory subunit (392 aa).

It belongs to the class-II aminoacyl-tRNA synthetase family. HisZ subfamily. In terms of assembly, heteromultimer composed of HisG and HisZ subunits.

The protein localises to the cytoplasm. The protein operates within amino-acid biosynthesis; L-histidine biosynthesis; L-histidine from 5-phospho-alpha-D-ribose 1-diphosphate: step 1/9. Functionally, required for the first step of histidine biosynthesis. May allow the feedback regulation of ATP phosphoribosyltransferase activity by histidine. In Prochlorococcus marinus (strain MIT 9303), this protein is ATP phosphoribosyltransferase regulatory subunit.